The primary structure comprises 200 residues: Protein-methionine-sulfoxide reductase heme-binding subunit MsrQ (200 aa).

5 consecutive transmembrane segments (helical) span residues 8 to 28 (ITWL…WLFY), 54 to 74 (LLLA…PLLI), 79 to 99 (LLGL…SLLE), 116 to 136 (PYLT…LTSF), and 153 to 173 (FIYL…KILS).

The protein belongs to the MsrQ family. As to quaternary structure, heterodimer of a catalytic subunit (MsrP) and a heme-binding subunit (MsrQ). It depends on FMN as a cofactor. Requires heme b as cofactor.

It is found in the cell inner membrane. In terms of biological role, part of the MsrPQ system that repairs oxidized periplasmic proteins containing methionine sulfoxide residues (Met-O), using respiratory chain electrons. Thus protects these proteins from oxidative-stress damage caused by reactive species of oxygen and chlorine generated by the host defense mechanisms. MsrPQ is essential for the maintenance of envelope integrity under bleach stress, rescuing a wide series of structurally unrelated periplasmic proteins from methionine oxidation. MsrQ provides electrons for reduction to the reductase catalytic subunit MsrP, using the quinone pool of the respiratory chain. The chain is Protein-methionine-sulfoxide reductase heme-binding subunit MsrQ from Cronobacter sakazakii (strain ATCC BAA-894) (Enterobacter sakazakii).